Consider the following 263-residue polypeptide: uncharacterized protein (263 aa).

Glycine 31 to threonine 38 lines the ATP pocket.

The protein belongs to the CbbQ/NirQ/NorQ/GpvN family.

This is an uncharacterized protein from Staphylococcus aureus (strain USA300).